A 616-amino-acid chain; its full sequence is 2-isopropylmalate synthase (616 aa).

The interval 1 to 34 (MSPNDAFISAPAKIETPVGPRNEGQPAWNKQRGS) is disordered. A Pyruvate carboxyltransferase domain is found at 67-341 (PQWCAVDLRD…DPQLDFTDIR (275 aa)). Residues Asp-76, His-280, His-282, and Asn-316 each coordinate Mg(2+). Residues 490–616 (RTAPVEQIAL…NHEAVLAGGV (127 aa)) are regulatory domain.

The protein belongs to the alpha-IPM synthase/homocitrate synthase family. LeuA type 2 subfamily. In terms of assembly, homodimer. Mg(2+) is required as a cofactor.

Its subcellular location is the cytoplasm. The catalysed reaction is 3-methyl-2-oxobutanoate + acetyl-CoA + H2O = (2S)-2-isopropylmalate + CoA + H(+). It functions in the pathway amino-acid biosynthesis; L-leucine biosynthesis; L-leucine from 3-methyl-2-oxobutanoate: step 1/4. Its activity is regulated as follows. Inhibited by L-leucine, the pathway end product. Functionally, catalyzes the condensation of the acetyl group of acetyl-CoA with 3-methyl-2-oxobutanoate (2-ketoisovalerate) to form 3-carboxy-3-hydroxy-4-methylpentanoate (2-isopropylmalate). Complements an E.coli leuA deletion. This chain is 2-isopropylmalate synthase, found in Corynebacterium glutamicum (strain ATCC 13032 / DSM 20300 / JCM 1318 / BCRC 11384 / CCUG 27702 / LMG 3730 / NBRC 12168 / NCIMB 10025 / NRRL B-2784 / 534).